The chain runs to 104 residues: Large ribosomal subunit protein bL21 (104 aa).

Basic residues predominate over residues 78–91 (KRRRQNSRRKRGHR). A disordered region spans residues 78–104 (KRRRQNSRRKRGHRQDHTVVRITGISA).

It belongs to the bacterial ribosomal protein bL21 family. Part of the 50S ribosomal subunit. Contacts protein L20.

Its function is as follows. This protein binds to 23S rRNA in the presence of protein L20. This chain is Large ribosomal subunit protein bL21, found in Methylobacterium radiotolerans (strain ATCC 27329 / DSM 1819 / JCM 2831 / NBRC 15690 / NCIMB 10815 / 0-1).